Consider the following 455-residue polypeptide: Protein indeterminate-domain 7 (455 aa).

The disordered stretch occupies residues 1–52; the sequence is MMMNRDILFHQQQQQQMEENMSNLTSASGDQASVSSGNRTETSGSNINQHHQ. Over residues 17-49 the composition is skewed to polar residues; the sequence is MEENMSNLTSASGDQASVSSGNRTETSGSNINQ. S82 carries the phosphoserine modification. 2 C2H2-type zinc fingers span residues 92–114 and 134–164; these read FICEVCNKGFQRDQNLQLHKRGH and YVCPEPGCVHHHPSRALGDLTGIKKHFFRKH. A Nuclear localization signal motif is present at residues 156–163; that stretch reads IKKHFFRK. Residues 169-192 form a C2H2-type 2; degenerate zinc finger; the sequence is WKCEKCSKKYAVQSDWKAHAKTCG. Zn(2+)-binding residues include C171, C174, H187, C191, C198, C200, H213, and C217. The CCHC-type 2; atypical zinc-finger motif lies at 196-219; the sequence is YKCDCGTLFSRRDSFITHRAFCDA. Residues 206 to 218 form an SHR-binding region; that stretch reads RRDSFITHRAFCD. Positions 235–351 are disordered; it reads QASNSPHHHH…PEEEERSSRS (117 aa). Low complexity-rich tracts occupy residues 248–265 and 288–299; these read QQNIGFSSSSQNIISNSN and SSNPNPNGNNGN.

It localises to the nucleus. In terms of biological role, probable transcription factor. The sequence is that of Protein indeterminate-domain 7 from Arabidopsis thaliana (Mouse-ear cress).